The sequence spans 296 residues: MAATVIDGKAFAARIRGQVAEHVAELKAGHGITPGLAVVLVGEDPASQVYVRSKGKQTVEVGMNSYEHKLDADTSEADLLALIDRLNGDPDVHGILVQLPLPGHLDEDLVINAIDPAKDVDGFHISNVGLLGTGQKSMVPCTPLGCLMMLRDHHGSLSGMDAVVIGRSNIVGKPMAQLLLGDSCTVTIAHSRTKDLADVVRRADIVVAAVGRPEMVPGDWIKPGATVIDVGINRIERDGKTRLVGDVHYDSCAQVAGAITPVPGGVGPMTIACLLANTLTACTRANKLTEPDGLTP.

NADP(+) is bound by residues 166–168, S191, and I232; that span reads GRS.

Belongs to the tetrahydrofolate dehydrogenase/cyclohydrolase family. In terms of assembly, homodimer.

The enzyme catalyses (6R)-5,10-methylene-5,6,7,8-tetrahydrofolate + NADP(+) = (6R)-5,10-methenyltetrahydrofolate + NADPH. It catalyses the reaction (6R)-5,10-methenyltetrahydrofolate + H2O = (6R)-10-formyltetrahydrofolate + H(+). Its pathway is one-carbon metabolism; tetrahydrofolate interconversion. Functionally, catalyzes the oxidation of 5,10-methylenetetrahydrofolate to 5,10-methenyltetrahydrofolate and then the hydrolysis of 5,10-methenyltetrahydrofolate to 10-formyltetrahydrofolate. The sequence is that of Bifunctional protein FolD 1/3 from Ruegeria pomeroyi (strain ATCC 700808 / DSM 15171 / DSS-3) (Silicibacter pomeroyi).